Reading from the N-terminus, the 162-residue chain is Cytochrome c-type biogenesis protein CcmE (162 aa).

The Cytoplasmic portion of the chain corresponds to 1 to 8 (MNPVRKKR). The helical; Signal-anchor for type II membrane protein transmembrane segment at 9 to 29 (LIIVLAIVVGVGAAVGLALSA) threads the bilayer. Over 30–162 (LQQNINLFYT…GETSYNQEGK (133 aa)) the chain is Periplasmic. H124 and Y128 together coordinate heme. Basic and acidic residues predominate over residues 139-148 (DSGQLKHYEN). The interval 139 to 162 (DSGQLKHYENGKAAGETSYNQEGK) is disordered.

The protein belongs to the CcmE/CycJ family.

It is found in the cell inner membrane. Heme chaperone required for the biogenesis of c-type cytochromes. Transiently binds heme delivered by CcmC and transfers the heme to apo-cytochromes in a process facilitated by CcmF and CcmH. In Pseudomonas aeruginosa (strain LESB58), this protein is Cytochrome c-type biogenesis protein CcmE.